The following is a 169-amino-acid chain: MLTAATEVLAAADGPGSAESAWAWRDAPIATLVQRIQQLQNERAQAFRRLDQAHRQYLLSGQHYDFPSYRSVVHEVTQAFAAASREVLAVEAELAGPRAQPVLARHVRSLQELEQTRLATVALLQVMGTPGVSEQDPEKLHQLKIKVIKTMEAIGEVLQELRFDAESAE.

The protein is Required for excision 1-B domain-containing protein of Mus musculus (Mouse).